Reading from the N-terminus, the 78-residue chain is Chondrosarcoma-associated gene 1 protein (78 aa).

An N-terminal signal peptide occupies residues 1–19 (MSATTACWPAFTVLGEARG). The tract at residues 35-78 (KMSRKPRASSPFSNNHPSTPKRFPRQPRREKGPVKEVPGTKGSP) is disordered.

In terms of tissue distribution, expressed in chondrosarcoma, melanoma, cartilage and testis, but not in other normal tissues.

It is found in the cytoplasm. The protein localises to the cytoskeleton. It localises to the microtubule organizing center. Its subcellular location is the centrosome. The protein resides in the spindle pole. Its function is as follows. May play an important role in maintaining centrosome integrity during mitosis. In Homo sapiens (Human), this protein is Chondrosarcoma-associated gene 1 protein.